Consider the following 298-residue polypeptide: N-acetylmuramic acid 6-phosphate etherase (298 aa).

Residues 55–218 enclose the SIS domain; that stretch reads ITESLRRGGR…STASMVRLGK (164 aa). The Proton donor role is filled by E83. E114 is an active-site residue.

It belongs to the GCKR-like family. MurNAc-6-P etherase subfamily. In terms of assembly, homodimer.

It catalyses the reaction N-acetyl-D-muramate 6-phosphate + H2O = N-acetyl-D-glucosamine 6-phosphate + (R)-lactate. Its pathway is amino-sugar metabolism; N-acetylmuramate degradation. Its function is as follows. Specifically catalyzes the cleavage of the D-lactyl ether substituent of MurNAc 6-phosphate, producing GlcNAc 6-phosphate and D-lactate. The sequence is that of N-acetylmuramic acid 6-phosphate etherase from Mycolicibacterium smegmatis (strain ATCC 700084 / mc(2)155) (Mycobacterium smegmatis).